Here is a 586-residue protein sequence, read N- to C-terminus: MAPISIADIVAALPAEDTWGPATASDNMLQGVPYAPFSKGDKLGRMADWTAESKDPNRAGRQAYNRNYRDQQVYGAGSSSLFAVQVAEDESSFSVVDNTRSSAKRTFGRGGGTVFRGRAQRGGAQRGGRAGFQRVGAGRGQGGDRYYDNRSGGRGNRGRRFGWKDYDKPQRTREPSVNVRPDWNMLEEVDFSRLSKLNLEAPEGEDVDSYGFLYHYDRSYDKAPVKNAERRLQSLDRAAYNVTTTQDPVIQELAEKNEATIFATSDILSMLMCAPRSVYSWDIVIVHQGNKIYFDKREGASLDLVTVNENAADAPLELADSANKQDAINTPSALAMEATFINHNFALQTVVESEDSKVSLAHPNPFYNAAEETEPLASKAYKYRRFDLSLERDDEPVNMIVRTEVDAIMKNPVNGEDQQLLVKALNEFDSKAQGSGGALDWRSKLWSQRGAVVATEMKNNSVKLARWTTQAILAKADGMKLGFVSRANPRSAAGHVVLGVVGYKPRDLAAQMNLNLGNGWGIVRTIVDRIRALDADEDEDKVTKYVLIKDPNRPVLRLYSVPATTFEEEEEVAAEEQEAAEEEAEE.

Residues 102 to 176 (SAKRTFGRGG…DKPQRTREPS (75 aa)) form a disordered region. The span at 162 to 174 (GWKDYDKPQRTRE) shows a compositional bias: basic and acidic residues. The RNA gate stretch occupies residues 301–315 (SLDLVTVNENAADAP). The tract at residues 567–586 (EEEEEVAAEEQEAAEEEAEE) is disordered.

Belongs to the eIF-3 subunit D family. In terms of assembly, component of the eukaryotic translation initiation factor 3 (eIF-3) complex.

It is found in the cytoplasm. In terms of biological role, mRNA cap-binding component of the eukaryotic translation initiation factor 3 (eIF-3) complex, which is involved in protein synthesis of a specialized repertoire of mRNAs and, together with other initiation factors, stimulates binding of mRNA and methionyl-tRNAi to the 40S ribosome. The eIF-3 complex specifically targets and initiates translation of a subset of mRNAs involved in cell proliferation. In the eIF-3 complex, eif3d specifically recognizes and binds the 7-methylguanosine cap of a subset of mRNAs. The chain is Eukaryotic translation initiation factor 3 subunit D from Aspergillus niger (strain ATCC MYA-4892 / CBS 513.88 / FGSC A1513).